A 536-amino-acid polypeptide reads, in one-letter code: Protoporphyrinogen oxidase, chloroplastic (536 aa).

Residues 1–36 constitute a chloroplast transit peptide; the sequence is MAAAAAAMATATSATAAPPLRIRDAARRTRRRGHVR. Residues 62-67, 87-88, and 111-114 each bind FAD; these read GGGISG, EA, and GPNS. The segment at 248–272 is disordered; the sequence is TIKTIQERGKNPKPPRDPRLPTPKG. The segment covering 252–266 has biased composition (basic and acidic residues); it reads IQERGKNPKPPRDPR. 510–512 contacts FAD; sequence VAL.

The protein belongs to the protoporphyrinogen/coproporphyrinogen oxidase family. Protoporphyrinogen oxidase subfamily. FAD serves as cofactor.

It is found in the plastid. Its subcellular location is the chloroplast. It carries out the reaction protoporphyrinogen IX + 3 O2 = protoporphyrin IX + 3 H2O2. Its pathway is porphyrin-containing compound metabolism; protoporphyrin-IX biosynthesis; protoporphyrin-IX from protoporphyrinogen-IX: step 1/1. It functions in the pathway porphyrin-containing compound metabolism; chlorophyll biosynthesis. Functionally, catalyzes the 6-electron oxidation of protoporphyrinogen-IX to form protoporphyrin-IX. The chain is Protoporphyrinogen oxidase, chloroplastic (PPOX1) from Oryza sativa subsp. japonica (Rice).